Here is a 663-residue protein sequence, read N- to C-terminus: Protein-arginine deiminase type-1 (663 aa).

14 residues coordinate Ca(2+): Asn-153, Asp-155, Asp-157, Asp-165, Asp-176, Asp-179, Gln-351, Glu-353, Lys-364, Asp-371, Ser-372, Asn-375, Phe-409, and Leu-412. Cys-645 functions as the Nucleophile in the catalytic mechanism.

The protein belongs to the protein arginine deiminase family. As to quaternary structure, monomer. Requires Ca(2+) as cofactor. In terms of tissue distribution, detected in epidermal keratinocytes (at protein level). Epidermis, prostate, testis, placenta, spleen and thymus.

Its subcellular location is the cytoplasm. It carries out the reaction L-arginyl-[protein] + H2O = L-citrullyl-[protein] + NH4(+). In terms of biological role, catalyzes the deimination of arginine residues of proteins. The sequence is that of Protein-arginine deiminase type-1 (PADI1) from Homo sapiens (Human).